The primary structure comprises 217 residues: Small ribosomal subunit protein uS3 (217 aa).

A KH type-2 domain is found at 38–106 (IRKYIEQRLA…RVHINIIEIK (69 aa)).

This sequence belongs to the universal ribosomal protein uS3 family. In terms of assembly, part of the 30S ribosomal subunit. Forms a tight complex with proteins S10 and S14.

In terms of biological role, binds the lower part of the 30S subunit head. Binds mRNA in the 70S ribosome, positioning it for translation. This Lactiplantibacillus plantarum (strain ATCC BAA-793 / NCIMB 8826 / WCFS1) (Lactobacillus plantarum) protein is Small ribosomal subunit protein uS3.